The primary structure comprises 330 residues: Probable cytosolic iron-sulfur protein assembly protein ciao1 (330 aa).

WD repeat units lie at residues 14-53, 59-98, 103-142, 148-187, 192-231, 244-283, and 295-330; these read HPDS…WECK, GHQR…FECL, GHEN…EYEC, SHTQ…WECR, GHES…DGSS, FHGR…DPEQ, and AHNQ…YNSA.

Belongs to the WD repeat CIA1 family. As to quaternary structure, component of the CIA complex.

Functionally, key component of the cytosolic iron-sulfur protein assembly (CIA) complex, a multiprotein complex that mediates the incorporation of iron-sulfur cluster into extramitochondrial Fe/S proteins. The sequence is that of Probable cytosolic iron-sulfur protein assembly protein ciao1 (ciao1) from Danio rerio (Zebrafish).